The following is a 314-amino-acid chain: Probable 5-dehydro-4-deoxyglucarate dehydratase (314 aa).

Belongs to the DapA family.

It catalyses the reaction 5-dehydro-4-deoxy-D-glucarate + H(+) = 2,5-dioxopentanoate + CO2 + H2O. The protein operates within carbohydrate acid metabolism; D-glucarate degradation; 2,5-dioxopentanoate from D-glucarate: step 2/2. The polypeptide is Probable 5-dehydro-4-deoxyglucarate dehydratase (Bradyrhizobium diazoefficiens (strain JCM 10833 / BCRC 13528 / IAM 13628 / NBRC 14792 / USDA 110)).